Consider the following 424-residue polypeptide: CinA-like protein (424 aa).

This sequence belongs to the CinA family.

The polypeptide is CinA-like protein (Shewanella halifaxensis (strain HAW-EB4)).